The chain runs to 304 residues: Ribonuclease Z (304 aa).

7 residues coordinate Zn(2+): His63, His65, Asp67, His68, His141, Asp208, and His266. The Proton acceptor role is filled by Asp67.

Belongs to the RNase Z family. Homodimer. Zn(2+) is required as a cofactor.

The catalysed reaction is Endonucleolytic cleavage of RNA, removing extra 3' nucleotides from tRNA precursor, generating 3' termini of tRNAs. A 3'-hydroxy group is left at the tRNA terminus and a 5'-phosphoryl group is left at the trailer molecule.. Functionally, zinc phosphodiesterase, which displays some tRNA 3'-processing endonuclease activity. Probably involved in tRNA maturation, by removing a 3'-trailer from precursor tRNA. In Chlamydia muridarum (strain MoPn / Nigg), this protein is Ribonuclease Z.